Consider the following 581-residue polypeptide: Meiotic PUF family protein 1 (581 aa).

In terms of domain architecture, PUM-HD spans 225–580; the sequence is FPNGTTEPFE…RIAALVEKSK (356 aa). Pumilio repeat units follow at residues 291 to 326, 327 to 362, 363 to 398, 403 to 438, 439 to 474, 475 to 510, 518 to 554, and 555 to 581; these read TILPFSVTLMKNKFGNFLIQKCFEYSTEAQLQSFSY, FLKKHVKELSIDAFGSHVLQKSLEIYPERFTNNLIE, ELIECLPATLMQRHSCHVWQKFFETRRKSLVDGIFD, KMQGKWLQVSVSEMGSLVVQTIFENCKEKDKRTCLD, EIINNMDQIICGQWGNWVIQHIIEHGSEPDKQRILN, SLLKEVESYSTNRYASKVVERALRVCHVTFFDRYVK, ELPTIFLQEIASNQYGNYIVQYLLQVATPSQINLMAE, and HLKKHMVSLRGHKYGQRIAALVEKSKS.

Its function is as follows. RNA-binding protein essential for meiotic progression. The protein is Meiotic PUF family protein 1 (mpf1) of Schizosaccharomyces pombe (strain 972 / ATCC 24843) (Fission yeast).